The chain runs to 100 residues: Apolipoprotein C-II (100 aa).

An N-terminal signal peptide occupies residues 1–22 (MGTRFLLALFLVLLVLGFEVQG). Residues 66–74 (TVDEKLRDM) are lipid binding. The lipoprotein lipase cofactor stretch occupies residues 78 to 100 (STAAVSTYAGIFTDQLLTLLKGD).

Belongs to the apolipoprotein C2 family. In terms of processing, proapolipoprotein C-II is synthesized as a sialic acid containing glycoprotein which is subsequently desialylated prior to its proteolytic processing. Proapolipoprotein C-II, the major form found in plasma undergoes proteolytic cleavage of its N-terminal hexapeptide to generate apolipoprotein C-II, which occurs as the minor form in plasma.

The protein localises to the secreted. Its function is as follows. Component of chylomicrons, very low-density lipoproteins (VLDL), low-density lipoproteins (LDL), and high-density lipoproteins (HDL) in plasma. Plays an important role in lipoprotein metabolism as an activator of lipoprotein lipase. Both proapolipoprotein C-II and apolipoprotein C-II can activate lipoprotein lipase. This is Apolipoprotein C-II (APOC2) from Otolemur garnettii (Small-eared galago).